Here is a 347-residue protein sequence, read N- to C-terminus: MPTPLTLADFDYHLPPELIAQSPAAERGGSRLLHLDAASRLHDRRFPDLAGLLRPHDLLVFNDTRVIKARLTGQKATGGKVEVLVERITAPDRALAHVRASKSPGPGMRLRLAEAFEAEVLGREGELFDLRFPAPVLDLLDAHGATPLPPYITHAADATDERRYQTVYAREPGAVAAPTAGLHFDQPMLEQLAAQGVQRAFVTLHVGAGTFQPVRVQNLAEHIMHAEWYTVPEATVAAIARARAHGGRIVAVGTTSVRALESAAAQAQDGPLAAAQGDTRLFITPGYRYRAVDALLTNFHLPQSTLLMLVSALAGVEPIRRAYAHAVAERYRFFSYGDAMFIETPAP.

The protein belongs to the QueA family. Monomer.

The protein resides in the cytoplasm. It carries out the reaction 7-aminomethyl-7-carbaguanosine(34) in tRNA + S-adenosyl-L-methionine = epoxyqueuosine(34) in tRNA + adenine + L-methionine + 2 H(+). It functions in the pathway tRNA modification; tRNA-queuosine biosynthesis. Functionally, transfers and isomerizes the ribose moiety from AdoMet to the 7-aminomethyl group of 7-deazaguanine (preQ1-tRNA) to give epoxyqueuosine (oQ-tRNA). The chain is S-adenosylmethionine:tRNA ribosyltransferase-isomerase from Bordetella pertussis (strain Tohama I / ATCC BAA-589 / NCTC 13251).